Here is a 540-residue protein sequence, read N- to C-terminus: Chaperonin GroEL (540 aa).

ATP-binding positions include 30 to 33 (TLGP), lysine 51, 87 to 91 (DGTTT), glycine 415, 479 to 481 (NAA), and aspartate 495.

The protein belongs to the chaperonin (HSP60) family. Forms a cylinder of 14 subunits composed of two heptameric rings stacked back-to-back. Interacts with the co-chaperonin GroES.

The protein localises to the cytoplasm. It carries out the reaction ATP + H2O + a folded polypeptide = ADP + phosphate + an unfolded polypeptide.. Functionally, together with its co-chaperonin GroES, plays an essential role in assisting protein folding. The GroEL-GroES system forms a nano-cage that allows encapsulation of the non-native substrate proteins and provides a physical environment optimized to promote and accelerate protein folding. This Pectobacterium carotovorum subsp. carotovorum (Erwinia carotovora subsp. carotovora) protein is Chaperonin GroEL.